The sequence spans 508 residues: TATA box-binding protein-like 1 (508 aa).

3 disordered regions span residues 145 to 190 (QISY…QMHH), 236 to 262 (EPIPVKIEVPDVPPEGTSAANEEPMPD), and 456 to 479 (QKKRKRKAPVNRGPPIKRERFDDS).

It belongs to the TBP family.

The protein resides in the nucleus. In terms of biological role, may be a general transcription factor. Plays an essential role for RNA polymerase II/ama-1 transcription in early embryos whereby it activates a subset of RNA polymerase II promoters and facilitates the reestablishment of transcription after mitosis. In Caenorhabditis elegans, this protein is TATA box-binding protein-like 1.